A 55-amino-acid chain; its full sequence is Large ribosomal subunit protein bL33 (55 aa).

The protein belongs to the bacterial ribosomal protein bL33 family.

The sequence is that of Large ribosomal subunit protein bL33 from Deinococcus geothermalis (strain DSM 11300 / CIP 105573 / AG-3a).